Consider the following 99-residue polypeptide: Aspartyl/glutamyl-tRNA(Asn/Gln) amidotransferase subunit C (99 aa).

The protein belongs to the GatC family. Heterotrimer of A, B and C subunits.

It catalyses the reaction L-glutamyl-tRNA(Gln) + L-glutamine + ATP + H2O = L-glutaminyl-tRNA(Gln) + L-glutamate + ADP + phosphate + H(+). The enzyme catalyses L-aspartyl-tRNA(Asn) + L-glutamine + ATP + H2O = L-asparaginyl-tRNA(Asn) + L-glutamate + ADP + phosphate + 2 H(+). Functionally, allows the formation of correctly charged Asn-tRNA(Asn) or Gln-tRNA(Gln) through the transamidation of misacylated Asp-tRNA(Asn) or Glu-tRNA(Gln) in organisms which lack either or both of asparaginyl-tRNA or glutaminyl-tRNA synthetases. The reaction takes place in the presence of glutamine and ATP through an activated phospho-Asp-tRNA(Asn) or phospho-Glu-tRNA(Gln). This chain is Aspartyl/glutamyl-tRNA(Asn/Gln) amidotransferase subunit C, found in Corynebacterium efficiens (strain DSM 44549 / YS-314 / AJ 12310 / JCM 11189 / NBRC 100395).